A 202-amino-acid chain; its full sequence is NADH-quinone oxidoreductase subunit J (202 aa).

The next 5 helical transmembrane spans lie at 3-23 (VFVF…LMVV), 31-51 (AVLW…LMGA), 53-73 (FVAM…FLFV), 93-113 (PVGG…LMVW), and 146-166 (LYLF…AILL).

This sequence belongs to the complex I subunit 6 family. In terms of assembly, NDH-1 is composed of 14 different subunits. Subunits NuoA, H, J, K, L, M, N constitute the membrane sector of the complex.

It is found in the cellular chromatophore membrane. It catalyses the reaction a quinone + NADH + 5 H(+)(in) = a quinol + NAD(+) + 4 H(+)(out). In terms of biological role, NDH-1 shuttles electrons from NADH, via FMN and iron-sulfur (Fe-S) centers, to quinones in the respiratory chain. The immediate electron acceptor for the enzyme in this species is believed to be ubiquinone. Couples the redox reaction to proton translocation (for every two electrons transferred, four hydrogen ions are translocated across the cytoplasmic membrane), and thus conserves the redox energy in a proton gradient. This chain is NADH-quinone oxidoreductase subunit J (nuoJ), found in Rhodobacter capsulatus (Rhodopseudomonas capsulata).